A 211-amino-acid polypeptide reads, in one-letter code: Ubiquitin-conjugating enzyme E2 S-B (211 aa).

In terms of domain architecture, UBC core spans 11–157; it reads HIIRRVYKEV…ARLMTDIHAQ (147 aa). Catalysis depends on cysteine 95, which acts as the Glycyl thioester intermediate. The disordered stretch occupies residues 158–211; sequence GTSLRGKDPTDPCSSASTPVVSGDGPMAKKHAGDRDKKLAAKKKTDKKRALRRL. Basic residues predominate over residues 197–211; it reads AAKKKTDKKRALRRL.

This sequence belongs to the ubiquitin-conjugating enzyme family.

The enzyme catalyses S-ubiquitinyl-[E1 ubiquitin-activating enzyme]-L-cysteine + [E2 ubiquitin-conjugating enzyme]-L-cysteine = [E1 ubiquitin-activating enzyme]-L-cysteine + S-ubiquitinyl-[E2 ubiquitin-conjugating enzyme]-L-cysteine.. Its pathway is protein modification; protein ubiquitination. Its function is as follows. Catalyzes the covalent attachment of ubiquitin to other proteins. Acts as an essential factor of the anaphase promoting complex/cyclosome (APC/C), a cell cycle-regulated ubiquitin ligase that controls progression through mitosis. Acts by specifically elongating 'Lys-11'-linked polyubiquitin chains initiated by the E2 enzyme ube2c/ubch10 on APC/C substrates, enhancing the degradation of APC/C substrates by the proteasome and promoting mitotic exit. The polypeptide is Ubiquitin-conjugating enzyme E2 S-B (ube2s-b) (Xenopus laevis (African clawed frog)).